The chain runs to 312 residues: MKALWALLLVPLLTGCLAEGELEVTDQLPGQSNQPWEQALNRFWDYLRWVQTLSDQVQEELQSSQVTQELTVLMEDTMTEVKAYKKELEEQLGPVAEETRARLAKEVQAAQARLGADMEDLRNRLGQYRNEVNTMLGQSTEELRSRLSTHLRKMRKRLMRDADDLQKRLAVYKAGAQEGAERGVSAIRERLGPLVEQGRQRTANLGSGAAQPLRDRAQALSDRIRGRLEEVGNQARDRLEEVRDQMEDVRSKMEEQTQQIRLQAEVFQARLKGWFEPLVEDMQRQWANLMEKIQASVATNSIASTTVPLENQ.

An N-terminal signal peptide occupies residues 1-18 (MKALWALLLVPLLTGCLA). 8 repeat units span residues 72–93 (VLME…EQLG), 94–115 (PVAE…ARLG), 116–137 (ADME…TMLG), 138–159 (QSTE…KRLM), 160–181 (RDAD…EGAE), 182–203 (RGVS…QRTA), 204–225 (NLGS…DRIR), and 226–247 (GRLE…DQME). The tract at residues 72–247 (VLMEDTMTEV…RLEEVRDQME (176 aa)) is 8 X 22 AA approximate tandem repeats. Methionine sulfoxide is present on methionine 135. Phosphoserine is present on serine 139. The tract at residues 150 to 160 (HLRKMRKRLMR) is LDL and other lipoprotein receptors binding. The interval 150-160 (HLRKMRKRLMR) is LDL receptor binding. 154–157 (MRKR) lines the heparin pocket. The tract at residues 202-282 (TANLGSGAAQ…GWFEPLVEDM (81 aa)) is lipid-binding and lipoprotein association. 221-228 (SDRIRGRL) is a binding site for heparin. Positions 258-312 (QQIRLQAEVFQARLKGWFEPLVEDMQRQWANLMEKIQASVATNSIASTTVPLENQ) are homooligomerization. Residues 270 to 282 (RLKGWFEPLVEDM) are specificity for association with VLDL.

It belongs to the apolipoprotein A1/A4/E family. As to quaternary structure, homotetramer. May interact with ABCA1; functionally associated with ABCA1 in the biogenesis of HDLs. May interact with APP/A4 amyloid-beta peptide; the interaction is extremely stable in vitro but its physiological significance is unclear. May interact with MAPT. May interact with MAP2. In the cerebrospinal fluid, interacts with secreted SORL1. Interacts with PMEL; this allows the loading of PMEL luminal fragment on ILVs to induce fibril nucleation. In terms of processing, APOE exists as multiple glycosylated and sialylated glycoforms within cells and in plasma. The extent of glycosylation and sialylation are tissue and context specific. Post-translationally, glycated in plasma VLDL. Phosphorylated by FAM20C in the extracellular medium.

The protein resides in the secreted. It localises to the extracellular space. Its subcellular location is the extracellular matrix. It is found in the extracellular vesicle. The protein localises to the endosome. The protein resides in the multivesicular body. In terms of biological role, APOE is an apolipoprotein, a protein associating with lipid particles, that mainly functions in lipoprotein-mediated lipid transport between organs via the plasma and interstitial fluids. APOE is a core component of plasma lipoproteins and is involved in their production, conversion and clearance. Apolipoproteins are amphipathic molecules that interact both with lipids of the lipoprotein particle core and the aqueous environment of the plasma. As such, APOE associates with chylomicrons, chylomicron remnants, very low density lipoproteins (VLDL) and intermediate density lipoproteins (IDL) but shows a preferential binding to high-density lipoproteins (HDL). It also binds a wide range of cellular receptors including the LDL receptor/LDLR, the LDL receptor-related proteins LRP1, LRP2 and LRP8 and the very low-density lipoprotein receptor/VLDLR that mediate the cellular uptake of the APOE-containing lipoprotein particles. Finally, APOE also has a heparin-binding activity and binds heparan-sulfate proteoglycans on the surface of cells, a property that supports the capture and the receptor-mediated uptake of APOE-containing lipoproteins by cells. A main function of APOE is to mediate lipoprotein clearance through the uptake of chylomicrons, VLDLs, and HDLs by hepatocytes. APOE is also involved in the biosynthesis by the liver of VLDLs as well as their uptake by peripheral tissues ensuring the delivery of triglycerides and energy storage in muscle, heart and adipose tissues. By participating in the lipoprotein-mediated distribution of lipids among tissues, APOE plays a critical role in plasma and tissues lipid homeostasis. APOE is also involved in two steps of reverse cholesterol transport, the HDLs-mediated transport of cholesterol from peripheral tissues to the liver, and thereby plays an important role in cholesterol homeostasis. First, it is functionally associated with ABCA1 in the biogenesis of HDLs in tissues. Second, it is enriched in circulating HDLs and mediates their uptake by hepatocytes. APOE also plays an important role in lipid transport in the central nervous system, regulating neuron survival and sprouting. The polypeptide is Apolipoprotein E (Apoe) (Rattus rattus (Black rat)).